A 239-amino-acid polypeptide reads, in one-letter code: tRNA (guanine-N(1)-)-methyltransferase (239 aa).

S-adenosyl-L-methionine-binding positions include G108 and 127–132 (LGDFVL).

Belongs to the RNA methyltransferase TrmD family. As to quaternary structure, homodimer.

Its subcellular location is the cytoplasm. The catalysed reaction is guanosine(37) in tRNA + S-adenosyl-L-methionine = N(1)-methylguanosine(37) in tRNA + S-adenosyl-L-homocysteine + H(+). Functionally, specifically methylates guanosine-37 in various tRNAs. In Streptococcus thermophilus (strain ATCC BAA-250 / LMG 18311), this protein is tRNA (guanine-N(1)-)-methyltransferase.